The chain runs to 379 residues: Salicylate/benzoate carboxyl methyltransferase (379 aa).

Tyrosine 40 contacts S-adenosyl-L-homocysteine. A salicylate-binding site is contributed by glutamine 47. 6 residues coordinate S-adenosyl-L-homocysteine: cysteine 82, asparagine 87, aspartate 119, leucine 120, serine 155, and phenylalanine 156. Positions 176 and 177 each coordinate salicylate. Asparagine 188, aspartate 275, phenylalanine 277, and asparagine 278 together coordinate Mg(2+).

This sequence belongs to the methyltransferase superfamily. Type-7 methyltransferase family. SABATH subfamily. Homodimer. Requires Mg(2+) as cofactor. In terms of tissue distribution, expressed in flowers and at lower levels in leaves and stems. Hardly detected in roots and siliques. Expressed in the sepals and the leaf trichomes and hydathodes.

The catalysed reaction is benzoate + S-adenosyl-L-methionine = methyl benzoate + S-adenosyl-L-homocysteine. The enzyme catalyses salicylate + S-adenosyl-L-methionine = methyl salicylate + S-adenosyl-L-homocysteine. Its function is as follows. Methyltransferase involved in the biosynthesis of methylsalicylate in response to stresses. Utilizes salicylic acid (SA) more efficiently than benzoic acid (BA). Can also use anthranilic acid and m-hydroxybenzoic acid as substrate. This chain is Salicylate/benzoate carboxyl methyltransferase (BSMT1), found in Arabidopsis thaliana (Mouse-ear cress).